A 507-amino-acid chain; its full sequence is uncharacterized protein (507 aa).

Disordered regions lie at residues 91–162, 174–255, and 309–422; these read NEKT…KKLL, EKLQ…QQQQ, and KRKL…NYST. Residues 116-143 show a composition bias toward acidic residues; sequence DSSESDSSESESDSSESESESESNETSE. Positions 144-155 are enriched in low complexity; the sequence is NESSSSSEPESS. The span at 174–193 shows a compositional bias: basic and acidic residues; the sequence is EKLQQEQQKQKEAQKPKEKP. 3 stretches are compositionally biased toward low complexity: residues 194–236, 243–255, and 313–350; these read QQQQ…QQIE, PQQQ…QQQQ, and QSQL…TNKP. The segment covering 351–360 has biased composition (basic residues); it reads LSKRQKKLLK. Residues 378-409 show a composition bias toward low complexity; the sequence is NNKNDNSTNDSNNNNDNNNNNKNDTNDSNNDD.

This is an uncharacterized protein from Dictyostelium discoideum (Social amoeba).